The primary structure comprises 98 residues: NADH-ubiquinone oxidoreductase chain 4L (98 aa).

3 consecutive transmembrane segments (helical) span residues 1–21, 29–49, and 61–81; these read MTLV…GLLM, SLLC…VTIL, and IILL…LVMV.

This sequence belongs to the complex I subunit 4L family. Core subunit of respiratory chain NADH dehydrogenase (Complex I) which is composed of 45 different subunits.

It localises to the mitochondrion inner membrane. It carries out the reaction a ubiquinone + NADH + 5 H(+)(in) = a ubiquinol + NAD(+) + 4 H(+)(out). Functionally, core subunit of the mitochondrial membrane respiratory chain NADH dehydrogenase (Complex I) which catalyzes electron transfer from NADH through the respiratory chain, using ubiquinone as an electron acceptor. Part of the enzyme membrane arm which is embedded in the lipid bilayer and involved in proton translocation. This chain is NADH-ubiquinone oxidoreductase chain 4L (MT-ND4L), found in Rousettus aegyptiacus (Egyptian fruit bat).